Here is a 107-residue protein sequence, read N- to C-terminus: Nucleoid-associated protein Lferr_1592 (107 aa).

Belongs to the YbaB/EbfC family. Homodimer.

The protein resides in the cytoplasm. It is found in the nucleoid. Functionally, binds to DNA and alters its conformation. May be involved in regulation of gene expression, nucleoid organization and DNA protection. The sequence is that of Nucleoid-associated protein Lferr_1592 from Acidithiobacillus ferrooxidans (strain ATCC 53993 / BNL-5-31) (Leptospirillum ferrooxidans (ATCC 53993)).